The following is a 312-amino-acid chain: Very-long-chain 3-oxoacyl-CoA reductase-like protein At1g24470 (312 aa).

Residues 14–34 (LHFVCFIGFLFLLRVLFIPLL) traverse the membrane as a helical segment. 52–81 (GSWAMVTGATEGIGRAFAHELAKHGLNLIL) contributes to the NADP(+) binding site. Serine 190 contributes to the substrate binding site. Tyrosine 205 serves as the catalytic Proton acceptor.

It belongs to the short-chain dehydrogenases/reductases (SDR) family. Expressed in green siliques, flowers, inflorescence stems and leaves. Not detected in roots.

Its subcellular location is the endoplasmic reticulum membrane. In terms of biological role, probable reductase, but unlike KCR1, has no beta-ketoacyl-coenzyme A reductase activity. The chain is Very-long-chain 3-oxoacyl-CoA reductase-like protein At1g24470 (KCR2) from Arabidopsis thaliana (Mouse-ear cress).